Consider the following 63-residue polypeptide: Sperm protamine P1 (63 aa).

A disordered region spans residues Met1 to Tyr63.

Belongs to the protamine P1 family. Testis.

It localises to the nucleus. The protein resides in the chromosome. In terms of biological role, protamines substitute for histones in the chromatin of sperm during the haploid phase of spermatogenesis. They compact sperm DNA into a highly condensed, stable and inactive complex. The sequence is that of Sperm protamine P1 (PRM1) from Pseudantechinus macdonnellensis (Fat-tailed marsupial mouse).